The chain runs to 1697 residues: UDP-sugar-dependent glycosyltransferase 52 (1697 aa).

Disordered stretches follow at residues 20-40 (HSDS…NYEN) and 142-166 (STDL…LMIP). The 99-residue stretch at 234 to 332 (DYVLENYLYK…WYHEINRMQK (99 aa)) folds into the PH domain. Disordered regions lie at residues 573 to 645 (FRSK…TTHE) and 707 to 756 (PLDK…KQSQ). 2 stretches are compositionally biased toward low complexity: residues 584 to 628 (QNSQ…SSSA) and 711 to 722 (QQQQQQQQQQQQ). GRAM domains are found at residues 658 to 793 (STFH…TKER) and 881 to 948 (IKIK…KKYS). The segment covering 739–749 (TDSDTDSESDF) has biased composition (acidic residues). Disordered stretches follow at residues 1011–1047 (SPSI…IHST), 1062–1085 (DGEN…SNSF), 1110–1130 (SAQQ…STTT), and 1466–1488 (EHNN…SNKS). Composition is skewed to low complexity over residues 1026-1047 (PPSS…IHST), 1065-1084 (NNSN…KSNS), 1112-1130 (QQQQ…STTT), and 1469-1479 (NNNNNNNNNNN). The segment at 1622–1685 (SSAPNSCMGC…VCDKCFNDLQ (64 aa)) adopts an FYVE-type zinc-finger fold. Zn(2+) contacts are provided by Cys1628, Cys1631, Cys1647, Cys1650, Cys1655, Cys1658, Cys1677, and Cys1680.

This sequence belongs to the glycosyltransferase 28 family.

The catalysed reaction is a sterol + UDP-alpha-D-glucose = a sterol 3-beta-D-glucoside + UDP + H(+). In terms of biological role, involved in the biosynthesis of sterol glucoside. Can use different sterols such as cholesterol, sitosterol, and ergosterol as sugar acceptors. This Dictyostelium discoideum (Social amoeba) protein is UDP-sugar-dependent glycosyltransferase 52 (ugt52).